A 428-amino-acid polypeptide reads, in one-letter code: Serine--tRNA ligase (428 aa).

Residue 235 to 237 coordinates L-serine; sequence TAE. Residue 266 to 268 coordinates ATP; that stretch reads RSE. Position 289 (Glu289) interacts with L-serine. An ATP-binding site is contributed by 353–356; sequence EISS. Ser389 serves as a coordination point for L-serine.

The protein belongs to the class-II aminoacyl-tRNA synthetase family. Type-1 seryl-tRNA synthetase subfamily. As to quaternary structure, homodimer. The tRNA molecule binds across the dimer.

It localises to the cytoplasm. It carries out the reaction tRNA(Ser) + L-serine + ATP = L-seryl-tRNA(Ser) + AMP + diphosphate + H(+). The enzyme catalyses tRNA(Sec) + L-serine + ATP = L-seryl-tRNA(Sec) + AMP + diphosphate + H(+). It participates in aminoacyl-tRNA biosynthesis; selenocysteinyl-tRNA(Sec) biosynthesis; L-seryl-tRNA(Sec) from L-serine and tRNA(Sec): step 1/1. In terms of biological role, catalyzes the attachment of serine to tRNA(Ser). Is also able to aminoacylate tRNA(Sec) with serine, to form the misacylated tRNA L-seryl-tRNA(Sec), which will be further converted into selenocysteinyl-tRNA(Sec). The sequence is that of Serine--tRNA ligase from Shewanella oneidensis (strain ATCC 700550 / JCM 31522 / CIP 106686 / LMG 19005 / NCIMB 14063 / MR-1).